The primary structure comprises 136 residues: Calmodulin-A (136 aa).

EF-hand domains are found at residues 1–36 (EQIA…LGQN), 37–72 (PTEA…KMKD), 74–109 (DSEE…LGEK), and 110–136 (LTDE…EEFV). Ca(2+)-binding residues include Asp-14, Asp-16, Asp-18, Thr-20, Glu-25, Asp-50, Asp-52, Asn-54, Thr-56, Glu-61, Asp-87, Asp-89, Asn-91, Tyr-93, and Glu-98. Lys-109 carries the post-translational modification N6,N6,N6-trimethyllysine. Ca(2+)-binding residues include Asp-123, Asp-125, Asp-127, Gln-129, and Glu-134.

Belongs to the calmodulin family.

Calmodulin acts as part of a calcium signal transduction pathway by mediating the control of a large number of enzymes, ion channels, aquaporins and other proteins through calcium-binding. Calcium-binding is required for the activation of calmodulin. Among the enzymes to be stimulated by the calmodulin-calcium complex are a number of protein kinases, such as myosin light-chain kinases and calmodulin-dependent protein kinase type II (CaMK2), and phosphatases. The polypeptide is Calmodulin-A (calm1) (Oryzias latipes (Japanese rice fish)).